The primary structure comprises 1164 residues: IgA FC receptor (1164 aa).

The signal sequence occupies residues 1–37 (MFKSNYERKMRYSIRKFSVGVASVAVASLFMGSVAHA). Disordered regions lie at residues 54 to 75 (KPYP…ELET) and 167 to 220 (HEEV…EDKD). Residues 59–73 (MAQTDQGNNSSSSEL) are compositionally biased toward polar residues. Composition is skewed to basic and acidic residues over residues 167–176 (HEEVEKDKKA) and 183–220 (KQSD…EDKD). IgA-binding regions lie at residues 199–438 (NHQK…KIEL) and 439–826 (TVSP…ETNT). Residues 434–534 (QKIELTVSPE…VEKTFTITVQ (101 aa)) enclose the Ig-like domain. Residues 536–564 (KEEKQVPKTPEQKDSKTEEKVPQEPKSND) show a composition bias toward basic and acidic residues. Disordered regions lie at residues 536 to 567 (KEEK…DKNQ) and 823 to 947 (ETNT…PDGL). Residues 911 to 920 (PKIPEPPKTP) are compositionally biased toward pro residues. The LPXTG sorting signal signature appears at 1132–1136 (LPYTG). Position 1135 is a pentaglycyl murein peptidoglycan amidated threonine (Thr-1135). The propeptide at 1136–1164 (GVASNLVLEIMGLLGLIGTSFIAMKRRKS) is removed by sortase.

The protein localises to the secreted. It is found in the cell wall. This is IgA FC receptor (bag) from Streptococcus agalactiae.